Reading from the N-terminus, the 1360-residue chain is Zinc finger protein GLI1 (1360 aa).

Residues 198-245 (DTIGSKRLEDGSEGDISSPASVGTQDPLLGLLDGRDDLEKDDGKHEPE) form a disordered region. The span at 230 to 245 (DGRDDLEKDDGKHEPE) shows a compositional bias: basic and acidic residues. The segment at 250–275 (TNCHWESCTKEFDTQEHLVHHINNEH) adopts a C2H2-type 1 zinc-finger fold. The tract at residues 298 to 306 (KAQYMLVVH) is interaction with DNA. 3 C2H2-type zinc fingers span residues 316–340 (HKCT…LRSH), 346–371 (YVCE…NRTH), and 377–402 (YVCK…KTVH). Interaction with DNA regions lie at residues 360–365 (ASDRAK) and 390–396 (DPSSLRK). Disordered regions lie at residues 390–434 (DPSS…NVKG), 457–500 (ITLK…SFED), 718–740 (IIHP…RTGG), and 1120–1213 (YMNY…IQPQ). Residues 461–473 (SQPSPGGQSSCSS) are compositionally biased toward low complexity. Over residues 474-496 (ERSPLGSTNNNDSGVEMNANTGG) the composition is skewed to polar residues. A compositionally biased stretch (low complexity) spans 1134-1143 (SPSSQDSQSS). The span at 1173–1190 (RQHSVSSQSTYMGSPNQL) shows a compositional bias: polar residues.

The protein belongs to the GLI C2H2-type zinc-finger protein family.

It localises to the cytoplasm. Its subcellular location is the nucleus. In terms of biological role, acts as a transcriptional activator. Binds to the DNA consensus sequence 5'-GACCACCCA-3'. May regulate the transcription of specific genes during normal development. Mediates SHH signaling. Plays a role in cell proliferation and differentiation via its role in SHH signaling. This chain is Zinc finger protein GLI1 (gli1), found in Xenopus laevis (African clawed frog).